The following is a 213-amino-acid chain: RNA chaperone ProQ (213 aa).

The disordered stretch occupies residues 105-150 (ESQEKAKAKRAAQTPKAAPAGKAPAKKAPKKVAVPARKTERPAKAA). Positions 115–127 (AAQTPKAAPAGKA) are enriched in low complexity.

It belongs to the ProQ family.

The protein localises to the cytoplasm. In terms of biological role, RNA chaperone with significant RNA binding, RNA strand exchange and RNA duplexing activities. The sequence is that of RNA chaperone ProQ from Shewanella oneidensis (strain ATCC 700550 / JCM 31522 / CIP 106686 / LMG 19005 / NCIMB 14063 / MR-1).